The chain runs to 150 residues: Large ribosomal subunit protein uL13 (150 aa).

It belongs to the universal ribosomal protein uL13 family. Part of the 50S ribosomal subunit.

In terms of biological role, this protein is one of the early assembly proteins of the 50S ribosomal subunit, although it is not seen to bind rRNA by itself. It is important during the early stages of 50S assembly. The protein is Large ribosomal subunit protein uL13 of Mesoplasma florum (strain ATCC 33453 / NBRC 100688 / NCTC 11704 / L1) (Acholeplasma florum).